A 218-amino-acid chain; its full sequence is Small ribosomal subunit protein uS3c (218 aa).

The KH type-2 domain maps to 47-118; sequence VQKNIRISSG…KLNIAITRIS (72 aa).

It belongs to the universal ribosomal protein uS3 family. Part of the 30S ribosomal subunit.

Its subcellular location is the plastid. It localises to the chloroplast. The polypeptide is Small ribosomal subunit protein uS3c (rps3) (Barbarea verna (Land cress)).